The chain runs to 122 residues: MKTQKQYLGAFGEDVALQQYLDDQATLLDRNVRYSCGELDLIVRLASGVVVFVEVKTRRGSAFDSAAAVNNQKMLRMRRAAALWLEGKPYTPIRFDVVAIVLDPHTGRPGITVYEDVEHGAR.

It belongs to the UPF0102 family.

This is UPF0102 protein cgR_1859 from Corynebacterium glutamicum (strain R).